We begin with the raw amino-acid sequence, 1372 residues long: Disease resistance protein RRS1B (1372 aa).

Positions 2–137 (TESEQIVYIS…ETVRDVYEKL (136 aa)) constitute a TIR domain. One can recognise an NB-ARC domain in the interval 166–417 (VGIWGMPGIG…GCGFFPHVGI (252 aa)). Residue 170–177 (GMPGIGKT) participates in ATP binding. Residues 491 to 515 (PEEIEGMFLDTSNLSFDIKHVAFDN) form an LRR 1 repeat. One copy of the LRR 2; degenerate repeat lies at 528–544 (NPEVHHVNNFLKGSLSS). 10 LRR repeats span residues 545–568 (LPNV…NFDP), 570–591 (HLVE…TKDL), 614–637 (AQNL…TGQL), 638–658 (LHLR…PEIP), 659–681 (PNIE…IVKP), 693–718 (IPGL…KIST), 723–747 (PGKL…VNLE), 749–767 (LKAL…QGFP), 768–792 (RNLK…SLEF), and 798–823 (CVSL…CFDL). Positions 950–964 (INLHCWALGKAVERD) match the Nuclear localization signal motif. Residues 1174–1240 (DRGSRSSDLW…YISEHNHPFP (67 aa)) constitute a DNA-binding region (WRKY). Disordered regions lie at residues 1246 to 1288 (LAGS…ASPP) and 1337 to 1372 (QTMF…ILNR). The segment covering 1249–1269 (STRSSSSKCSDVTTSASSTVS) has biased composition (low complexity). Basic and acidic residues predominate over residues 1270 to 1279 (QDKEGPDKSH). Residues 1337-1348 (QTMFLSRRSSGG) are compositionally biased toward polar residues.

Belongs to the disease resistance TIR-NB-LRR family. As to quaternary structure, interacts with RPS4B. RPS4B-RRS1B heterodimer interacts with the bacterial effectors AvrRps4 and PopP2.

Its subcellular location is the nucleus. Its function is as follows. Transcription factor. Interacts specifically with the W box (5'-(T)TGAC[CT]-3'), a frequently occurring elicitor-responsive cis-acting element. Also acts as a disease resistance protein that specifically recognizes the AvrRps4 type III effector avirulence protein from P.syringae. Heterodimerization with RPS4B is required to form a functional complex to recognize AvrRps4 and to mediate the hypersensitive response. The polypeptide is Disease resistance protein RRS1B (Arabidopsis thaliana (Mouse-ear cress)).